We begin with the raw amino-acid sequence, 364 residues long: MSHTTHPYQKELEVATLAVKRASLLTKQLSDSIVQTARSGTLTKDDKSPVTIGDFALQAIINHAIKLNFPSDEIVGEEDSQELQENSSLADQVLSLIIKIQQETSVYNDVVGTLTDKNKVFQSIDYGNSQGGLKGRFWALDPIDGTKGFLRGDQFAVCLALIEDGKVVLGVIGCPNLLENIVSNEEHSGVVGGLYSAVKGVGSFYSELFKEGAEPLSQQKPIKMQNHTNPSQLKVVEGVEKGHSSHSTQAEIKAKLGFDPTTVAKQTVNLDSQVKYCVLASGQADIYLRLPVSDTYREKIWDHAAGNILIYESGGQVGDVTGAPLNFGNGRTLDSKGVIAANKEIFDKVIDAVTEIRKSSTPRV.

D54 functions as the Proton acceptor in the catalytic mechanism. E77, D141, I143, and D144 together coordinate Mg(2+). Catalysis depends on T146, which acts as the Proton acceptor. Positions 146, 243, 272, 275, 289, and 302 each coordinate adenosine 3',5'-bisphosphate. H243, S272, K275, R289, and D302 together coordinate AMP. D302 contributes to the Mg(2+) binding site.

The protein belongs to the inositol monophosphatase superfamily. It depends on Mg(2+) as a cofactor.

The enzyme catalyses 3'-phosphoadenylyl sulfate + H2O = adenosine 5'-phosphosulfate + phosphate. It carries out the reaction adenosine 3',5'-bisphosphate + H2O = AMP + phosphate. It catalyses the reaction adenosine 2',5'-bisphosphate + H2O = AMP + phosphate. Phosphatase that converts adenosine 3'-phosphate 5'-phosphosulfate (PAPS) to adenosine 5'-phosphosulfate (APS) and 3'(2')-phosphoadenosine 5'-phosphate (PAP) to AMP. Regulates the flux of sulfur in the sulfur-activation pathway by converting PAPS to APS. Involved in salt tolerance. The protein is 3'(2'),5'-bisphosphate nucleotidase 1 (HAL21) of Candida albicans (strain WO-1) (Yeast).